The following is a 403-amino-acid chain: Protein-export membrane protein SecD (403 aa).

Helical transmembrane passes span 13 to 33, 245 to 265, 285 to 305, 306 to 326, 347 to 367, and 368 to 388; these read LLVI…KGVN, FLKM…VIIA, VVFL…PALA, GIIL…DEIV, VVLA…VAGM, and GLLK…VVIT.

Belongs to the SecD/SecF family. SecD subfamily. As to quaternary structure, part of the protein translocation apparatus. Forms a complex with SecF.

Its subcellular location is the cell membrane. Functionally, involved in protein export. The protein is Protein-export membrane protein SecD of Methanopyrus kandleri (strain AV19 / DSM 6324 / JCM 9639 / NBRC 100938).